The following is a 472-amino-acid chain: Cysteine--tRNA ligase (472 aa).

A Zn(2+)-binding site is contributed by cysteine 29. Residues 31–41 carry the 'HIGH' region motif; sequence PTVYDFAHIGN. Residues cysteine 227, histidine 252, and glutamate 256 each contribute to the Zn(2+) site. The 'KMSKS' region motif lies at 285–289; that stretch reads KMSKS. Lysine 288 contributes to the ATP binding site.

This sequence belongs to the class-I aminoacyl-tRNA synthetase family. Monomer. It depends on Zn(2+) as a cofactor.

Its subcellular location is the cytoplasm. It carries out the reaction tRNA(Cys) + L-cysteine + ATP = L-cysteinyl-tRNA(Cys) + AMP + diphosphate. The polypeptide is Cysteine--tRNA ligase (Bradyrhizobium sp. (strain BTAi1 / ATCC BAA-1182)).